We begin with the raw amino-acid sequence, 848 residues long: ATP-dependent Clp protease ATP-binding subunit ClpC1 (848 aa).

One can recognise a Clp R domain in the interval 2–144 (FERFTDRARR…RQQVIQLLSG (143 aa)). Repeat regions lie at residues 5-70 (FTDR…IGQG) and 80-144 (FTPR…LLSG). Residues 425 to 460 (DEKIADARREKESAIDAQDFEKAAALRDKEKQLVAQ) enclose the UVR domain. ATP is bound by residues 553–560 (GPSGVGKT) and 617–626 (KPFSVVLFDE). The tract at residues 811–848 (GQGEDAKFTFSGGPKRAETAEPDLAGAGAAGAPTAGTE) is disordered. The segment covering 835-848 (AGAGAAGAPTAGTE) has biased composition (low complexity).

The protein belongs to the ClpA/ClpB family. ClpC subfamily.

In terms of biological role, ATP-dependent specificity component of the Clp protease. It directs the protease to specific substrates. Can perform chaperone functions in the absence of ClpP. Degrades anti-sigma-E factor RseA in the presence of ClpP2. The polypeptide is ATP-dependent Clp protease ATP-binding subunit ClpC1 (clpC1) (Mycolicibacterium smegmatis (strain ATCC 700084 / mc(2)155) (Mycobacterium smegmatis)).